A 1406-amino-acid chain; its full sequence is EF-hand calcium-binding domain-containing protein 5 (1406 aa).

Positions 255–655 (NKDLPQQQRD…KACEPKPQHV (401 aa)) are disordered. 8 stretches are compositionally biased toward polar residues: residues 258 to 294 (LPQQQRDQELSSDSTTEPETATQLTSQQRSRRVSLTG), 322 to 334 (RRSSGVNQTQQRG), 342 to 354 (RRSSAVEQTQQRG), 362 to 373 (RRSSTVEQTRQR), 382 to 393 (RRSSTVEQTQRR), 402 to 414 (RRSSGVNQTQQRG), 422 to 434 (RRSSAVEQTQQRG), and 442 to 464 (RRSSAMEQEPQTAQDPNSDSLPE). Basic and acidic residues predominate over residues 465 to 477 (QESHRGSITEGSH). Residues 501–513 (DDSGSAGSRRGSG) show a composition bias toward low complexity. Residues 564–577 (QELDEDSTPQLEDD) are compositionally biased toward acidic residues. Basic and acidic residues-rich tracts occupy residues 578-598 (SALKESKTSELTKIETQEEKP) and 638-655 (SKRDSQKDKACEPKPQHV). In terms of domain architecture, EF-hand spans 773–808 (RRRILLQAIFEKWDNDGSGFLDLNEVDDLLYTYKEG). Residues Asp-786, Asp-788, Ser-790, and Glu-797 each coordinate Ca(2+).

This Mus musculus (Mouse) protein is EF-hand calcium-binding domain-containing protein 5 (Efcab5).